The chain runs to 209 residues: Putative thymidylate synthase (209 aa).

C137 is an active-site residue.

The protein belongs to the thymidylate synthase family. Archaeal-type ThyA subfamily. Monomer.

It is found in the cytoplasm. It functions in the pathway pyrimidine metabolism; dTTP biosynthesis. In terms of biological role, may catalyze the biosynthesis of dTMP using an unknown cosubstrate. This Methanopyrus kandleri (strain AV19 / DSM 6324 / JCM 9639 / NBRC 100938) protein is Putative thymidylate synthase.